A 416-amino-acid chain; its full sequence is Gamma-glutamyl phosphate reductase (416 aa).

The protein belongs to the gamma-glutamyl phosphate reductase family.

It localises to the cytoplasm. It carries out the reaction L-glutamate 5-semialdehyde + phosphate + NADP(+) = L-glutamyl 5-phosphate + NADPH + H(+). Its pathway is amino-acid biosynthesis; L-proline biosynthesis; L-glutamate 5-semialdehyde from L-glutamate: step 2/2. Its function is as follows. Catalyzes the NADPH-dependent reduction of L-glutamate 5-phosphate into L-glutamate 5-semialdehyde and phosphate. The product spontaneously undergoes cyclization to form 1-pyrroline-5-carboxylate. The protein is Gamma-glutamyl phosphate reductase of Petrotoga mobilis (strain DSM 10674 / SJ95).